A 782-amino-acid polypeptide reads, in one-letter code: E3 UFM1-protein ligase 1 homolog (782 aa).

Residues 405-478 (VSTQELEDDG…TRGGGGASKK (74 aa)) are disordered.

It belongs to the UFL1 family.

E3 UFM1-protein ligase that mediates ufmylation of target proteins. In Drosophila sechellia (Fruit fly), this protein is E3 UFM1-protein ligase 1 homolog.